Here is a 225-residue protein sequence, read N- to C-terminus: Glutathione S-transferase Mu 3 (225 aa).

The region spanning 5–92 (SSMVLGYWDI…YIARKHNMCG (88 aa)) is the GST N-terminal domain. Residues 11–12 (YW), 50–54 (WLDVK), and 63–64 (NL) each bind glutathione. Lys-54 is covalently cross-linked (Glycyl lysine isopeptide (Lys-Gly) (interchain with G-Cter in SUMO2)). Lys-73 is covalently cross-linked (Glycyl lysine isopeptide (Lys-Gly) (interchain with G-Cter in SUMO2)). 76–77 (QS) contributes to the glutathione binding site. The GST C-terminal domain occupies 94–212 (TEEEKIRVDI…QSDQFCKMPI (119 aa)). Tyr-120 serves as a coordination point for substrate.

This sequence belongs to the GST superfamily. Mu family. In terms of assembly, homodimer. The N-terminus is blocked. As to expression, testis and brain.

Its subcellular location is the cytoplasm. It catalyses the reaction RX + glutathione = an S-substituted glutathione + a halide anion + H(+). Its function is as follows. Conjugation of reduced glutathione to a wide number of exogenous and endogenous hydrophobic electrophiles. May govern uptake and detoxification of both endogenous compounds and xenobiotics at the testis and brain blood barriers. The chain is Glutathione S-transferase Mu 3 (GSTM3) from Homo sapiens (Human).